The chain runs to 127 residues: Urotensin-2 (127 aa).

Positions 1–16 (MSKLFFCCLILAGSFC) are cleaved as a signal peptide. Residues 17–111 (SFRSLPIIVP…RLQSKDRKQF (95 aa)) constitute a propeptide that is removed on maturation. Cys121 and Cys126 are joined by a disulfide.

It belongs to the urotensin-2 family. As to expression, central nervous system. Spinal cord.

The protein localises to the secreted. Its function is as follows. Involved in smooth muscle stimulating and ion mobilizing activities. It has a suggested role as a corticotropin-releasing factor. In Pelophylax ridibundus (Marsh frog), this protein is Urotensin-2 (UTS2).